Consider the following 541-residue polypeptide: MSFSATILFSPPSGSEARCCCCACKSETSQGSTGSQGGNPPASTPITVTGHGLAVQSSEQLLHIIYQRVDKAVGLAEAALGLARANNELLKQLQEEVGELRQGKVCTADEDRESRARTPPPEEPGVLKGSPGEASNSLPAMEEECDSVGSGVQVVIEELRQLGAASTVGQGPLGFFAAPQRDARLPGCTLAAVEGAPLLNPMADDYVASEGSIQRVLVPAYAKQLSPATQLAIQRASSETGPESGTKLPATRPEGVLGSAALDSALDESGAGGAGELSRSLGFVGSPCRIRGTGQKNSRRKRDLVLSKLVHNVHNHITNDKRFNGSESIKSSWNISVVKFLLEKLKQELMVSPHNYTDKELKGACVAYFLTKRREYRNSLNPFKGLKEKEEKKLRSRRYRLFANRSSIMRHFGPEDQHLWKDVTEELMSDEEDSLNEPGVWVARSPRFRAQRLTELCYHLDANSKHGTKANRVYGPPSDRLPSVEAQLLPPELYNPNFQEDEGGGNEKGPVSPSYDQPHKTSCPDLNSFIEIKVEKDEYTL.

An N-terminal signal peptide occupies residues 1-17; the sequence is MSFSATILFSPPSGSEA. 2 disordered regions span residues 28–47 and 103–138; these read TSQG…TPIT and GKVC…SNSL. Basic and acidic residues predominate over residues 103-116; that stretch reads GKVCTADEDRESRA. Position 118 is a phosphothreonine (threonine 118). Glycyl lysine isopeptide (Lys-Gly) (interchain with G-Cter in SUMO2) cross-links involve residues lysine 128 and lysine 223. At serine 226 the chain carries Phosphoserine. The span at 232–243 shows a compositional bias: polar residues; the sequence is AIQRASSETGPE. Residues 232-254 form a disordered region; the sequence is AIQRASSETGPESGTKLPATRPE. A phosphoserine mark is found at serine 286 and serine 429. The interval 494–526 is disordered; that stretch reads YNPNFQEDEGGGNEKGPVSPSYDQPHKTSCPDL.

It localises to the secreted. This is an uncharacterized protein from Mus musculus (Mouse).